Here is a 164-residue protein sequence, read N- to C-terminus: Shikimate kinase (164 aa).

An ATP-binding site is contributed by 11 to 16 (GSGKST). Ser15 serves as a coordination point for Mg(2+). Substrate is bound by residues Asp33, Arg57, and Gly79. Arg117 lines the ATP pocket. A substrate-binding site is contributed by Arg134.

The protein belongs to the shikimate kinase family. Monomer. Mg(2+) is required as a cofactor.

It is found in the cytoplasm. It carries out the reaction shikimate + ATP = 3-phosphoshikimate + ADP + H(+). It functions in the pathway metabolic intermediate biosynthesis; chorismate biosynthesis; chorismate from D-erythrose 4-phosphate and phosphoenolpyruvate: step 5/7. Functionally, catalyzes the specific phosphorylation of the 3-hydroxyl group of shikimic acid using ATP as a cosubstrate. This is Shikimate kinase from Persephonella marina (strain DSM 14350 / EX-H1).